Consider the following 346-residue polypeptide: uncharacterized protein (346 aa).

The disordered stretch occupies residues 322 to 346 (GRDGGYRETTSPPTGRGRNVRGSHA).

This is an uncharacterized protein from Mycobacterium tuberculosis (strain CDC 1551 / Oshkosh).